The sequence spans 127 residues: Prophage antitermination protein Q homolog QuuD (127 aa).

It belongs to the phage antitermination Q type 1 family.

In terms of biological role, positively regulate expression of some phage genes. Bacterial host RNA polymerase modified by antitermination proteins transcribes through termination sites that otherwise prevent expression of the regulated genes. The polypeptide is Prophage antitermination protein Q homolog QuuD (quuD) (Escherichia coli (strain K12)).